A 43-amino-acid chain; its full sequence is Thymosin beta-12 (43 aa).

Basic and acidic residues-rich tracts occupy residues 1–25 and 33–43; these read MSDK…ETQE and ETIEQEKQATA. The segment at 1–43 is disordered; it reads MSDKPDLAEVSNFDKTKLKKTETQEKNPLPTKETIEQEKQATA. An N-acetylserine modification is found at serine 2.

It belongs to the thymosin beta family.

It is found in the cytoplasm. Its subcellular location is the cytoskeleton. In terms of biological role, plays an important role in the organization of the cytoskeleton. Binds to and sequesters actin monomers (G actin) and therefore inhibits actin polymerization. The chain is Thymosin beta-12 from Oncorhynchus mykiss (Rainbow trout).